Here is a 269-residue protein sequence, read N- to C-terminus: uncharacterized protein (269 aa).

Over residues methionine 1–histidine 12 the composition is skewed to basic residues. Residues methionine 1–valine 82 form a disordered region. Over residues proline 21–leucine 33 the composition is skewed to acidic residues. Residues glutamate 34 to asparagine 63 are compositionally biased toward basic and acidic residues.

This is an uncharacterized protein from Dictyostelium discoideum (Social amoeba).